Here is a 170-residue protein sequence, read N- to C-terminus: Ureidoglycolate lyase (170 aa).

The protein belongs to the ureidoglycolate lyase family. As to quaternary structure, homodimer. It depends on Ni(2+) as a cofactor.

It carries out the reaction (S)-ureidoglycolate = urea + glyoxylate. Its pathway is nitrogen metabolism; (S)-allantoin degradation. Catalyzes the catabolism of the allantoin degradation intermediate (S)-ureidoglycolate, generating urea and glyoxylate. Involved in the utilization of allantoin as nitrogen source. This Burkholderia mallei (strain NCTC 10247) protein is Ureidoglycolate lyase.